Reading from the N-terminus, the 162-residue chain is Putative 4-hydroxy-4-methyl-2-oxoglutarate aldolase (162 aa).

Substrate contacts are provided by residues 75-78 (GDML) and arginine 97. Aspartate 98 is an a divalent metal cation binding site.

It belongs to the class II aldolase/RraA-like family. In terms of assembly, homotrimer. It depends on a divalent metal cation as a cofactor.

It carries out the reaction 4-hydroxy-4-methyl-2-oxoglutarate = 2 pyruvate. The catalysed reaction is oxaloacetate + H(+) = pyruvate + CO2. Its function is as follows. Catalyzes the aldol cleavage of 4-hydroxy-4-methyl-2-oxoglutarate (HMG) into 2 molecules of pyruvate. Also contains a secondary oxaloacetate (OAA) decarboxylase activity due to the common pyruvate enolate transition state formed following C-C bond cleavage in the retro-aldol and decarboxylation reactions. In Pseudomonas syringae pv. tomato (strain ATCC BAA-871 / DC3000), this protein is Putative 4-hydroxy-4-methyl-2-oxoglutarate aldolase.